The primary structure comprises 698 residues: Elongation factor G (698 aa).

The tr-type G domain occupies 10–285 (DKTRNIGIMA…GVVDYLPSPL (276 aa)). Residues 19-26 (AHIDAGKT), 83-87 (DTPGH), and 137-140 (NKMD) contribute to the GTP site.

It belongs to the TRAFAC class translation factor GTPase superfamily. Classic translation factor GTPase family. EF-G/EF-2 subfamily.

The protein localises to the cytoplasm. Functionally, catalyzes the GTP-dependent ribosomal translocation step during translation elongation. During this step, the ribosome changes from the pre-translocational (PRE) to the post-translocational (POST) state as the newly formed A-site-bound peptidyl-tRNA and P-site-bound deacylated tRNA move to the P and E sites, respectively. Catalyzes the coordinated movement of the two tRNA molecules, the mRNA and conformational changes in the ribosome. The protein is Elongation factor G of Lactobacillus johnsonii (strain CNCM I-12250 / La1 / NCC 533).